A 245-amino-acid chain; its full sequence is Phosphoadenosine 5'-phosphosulfate reductase (245 aa).

C239 serves as the catalytic Nucleophile; cysteine thiosulfonate intermediate.

This sequence belongs to the PAPS reductase family. CysH subfamily.

Its subcellular location is the cytoplasm. It carries out the reaction [thioredoxin]-disulfide + sulfite + adenosine 3',5'-bisphosphate + 2 H(+) = [thioredoxin]-dithiol + 3'-phosphoadenylyl sulfate. It functions in the pathway sulfur metabolism; hydrogen sulfide biosynthesis; sulfite from sulfate: step 3/3. In terms of biological role, catalyzes the formation of sulfite from phosphoadenosine 5'-phosphosulfate (PAPS) using thioredoxin as an electron donor. This Alkalilimnicola ehrlichii (strain ATCC BAA-1101 / DSM 17681 / MLHE-1) protein is Phosphoadenosine 5'-phosphosulfate reductase.